Reading from the N-terminus, the 86-residue chain is Protein Tat (86 aa).

Residues 1–24 (MEPVDPRLEPWKHPGSQPKTACTN) are interaction with human CREBBP. A transactivation region spans residues 1–48 (MEPVDPRLEPWKHPGSQPKTACTNCYCKKCCFHCQVCFITKALGISYG). Residues Cys-22, Cys-25, and Cys-27 each contribute to the Zn(2+) site. Residues 22–37 (CTNCYCKKCCFHCQVC) are cysteine-rich. Lys-28 carries the N6-acetyllysine; by host PCAF modification. Positions 30, 33, 34, and 37 each coordinate Zn(2+). The tract at residues 38–48 (FITKALGISYG) is core. Over residues 48–59 (GRKKRRQRRRAH) the composition is skewed to basic residues. Positions 48 to 86 (GRKKRRQRRRAHQNSQTHQASLSKQPTSQPRGDPTGPKE) are disordered. Residues 49–57 (RKKRRQRRR) carry the Nuclear localization signal, RNA-binding (TAR), and protein transduction motif. Positions 49–86 (RKKRRQRRRAHQNSQTHQASLSKQPTSQPRGDPTGPKE) are interaction with the host capping enzyme RNGTT. An N6-acetyllysine; by host EP300 and GCN5L2 mark is found at Lys-50 and Lys-51. 2 positions are modified to asymmetric dimethylarginine; by host PRMT6: Arg-52 and Arg-53. A compositionally biased stretch (polar residues) spans 60 to 77 (QNSQTHQASLSKQPTSQP). A Glycyl lysine isopeptide (Lys-Gly) (interchain with G-Cter in ubiquitin) cross-link involves residue Lys-71. A Cell attachment site motif is present at residues 78 to 80 (RGD).

This sequence belongs to the lentiviruses Tat family. In terms of assembly, interacts with host CCNT1. Associates with the P-TEFb complex composed at least of Tat, P-TEFb (CDK9 and CCNT1), TAR RNA, RNA Pol II. Recruits the HATs CREBBP, TAF1/TFIID, EP300, PCAF and GCN5L2. Interacts with host KAT5/Tip60; this interaction targets the latter to degradation. Interacts with the host deacetylase SIRT1. Interacts with host capping enzyme RNGTT; this interaction stimulates RNGTT. Binds to host KDR, and to the host integrins ITGAV/ITGB3 and ITGA5/ITGB1. Interacts with host KPNB1/importin beta-1 without previous binding to KPNA1/importin alpha-1. Interacts with EIF2AK2. Interacts with host nucleosome assembly protein NAP1L1; this interaction may be required for the transport of Tat within the nucleus, since the two proteins interact at the nuclear rim. Interacts with host C1QBP/SF2P32; this interaction involves lysine-acetylated Tat. Interacts with the host chemokine receptors CCR2, CCR3 and CXCR4. Interacts with host DPP4/CD26; this interaction may trigger an anti-proliferative effect. Interacts with host LDLR. Interacts with the host extracellular matrix metalloproteinase MMP1. Interacts with host PRMT6; this interaction mediates Tat's methylation. Interacts with, and is ubiquitinated by MDM2/Hdm2. Interacts with host PSMC3 and HTATIP2. Interacts with STAB1; this interaction may overcome SATB1-mediated repression of IL2 and IL2RA (interleukin) in T cells by binding to the same domain than HDAC1. Interacts (when acetylated) with human CDK13, thereby increasing HIV-1 mRNA splicing and promoting the production of the doubly spliced HIV-1 protein Nef. Interacts with host TBP; this interaction modulates the activity of transcriptional pre-initiation complex. Interacts with host RELA. Interacts with host PLSCR1; this interaction negatively regulates Tat transactivation activity by altering its subcellular distribution. Asymmetrical arginine methylation by host PRMT6 seems to diminish the transactivation capacity of Tat and affects the interaction with host CCNT1. In terms of processing, acetylation by EP300, CREBBP, GCN5L2/GCN5 and PCAF regulates the transactivation activity of Tat. EP300-mediated acetylation of Lys-50 promotes dissociation of Tat from the TAR RNA through the competitive binding to PCAF's bromodomain. In addition, the non-acetylated Tat's N-terminus can also interact with PCAF. PCAF-mediated acetylation of Lys-28 enhances Tat's binding to CCNT1. Lys-50 is deacetylated by SIRT1. Post-translationally, polyubiquitination by host MDM2 does not target Tat to degradation, but activates its transactivation function and fosters interaction with CCNT1 and TAR RNA. Phosphorylated by EIF2AK2 on serine and threonine residues adjacent to the basic region important for TAR RNA binding and function. Phosphorylation of Tat by EIF2AK2 is dependent on the prior activation of EIF2AK2 by dsRNA.

It is found in the host nucleus. It localises to the host nucleolus. The protein resides in the host cytoplasm. The protein localises to the secreted. Functionally, transcriptional activator that increases RNA Pol II processivity, thereby increasing the level of full-length viral transcripts. Recognizes a hairpin structure at the 5'-LTR of the nascent viral mRNAs referred to as the transactivation responsive RNA element (TAR) and recruits the cyclin T1-CDK9 complex (P-TEFb complex) that will in turn hyperphosphorylate the RNA polymerase II to allow efficient elongation. The CDK9 component of P-TEFb and other Tat-activated kinases hyperphosphorylate the C-terminus of RNA Pol II that becomes stabilized and much more processive. Other factors such as HTATSF1/Tat-SF1, SUPT5H/SPT5, and HTATIP2 are also important for Tat's function. Besides its effect on RNA Pol II processivity, Tat induces chromatin remodeling of proviral genes by recruiting the histone acetyltransferases (HATs) CREBBP, EP300 and PCAF to the chromatin. This also contributes to the increase in proviral transcription rate, especially when the provirus integrates in transcriptionally silent region of the host genome. To ensure maximal activation of the LTR, Tat mediates nuclear translocation of NF-kappa-B by interacting with host RELA. Through its interaction with host TBP, Tat may also modulate transcription initiation. Tat can reactivate a latently infected cell by penetrating in it and transactivating its LTR promoter. In the cytoplasm, Tat is thought to act as a translational activator of HIV-1 mRNAs. Its function is as follows. Extracellular circulating Tat can be endocytosed by surrounding uninfected cells via the binding to several surface receptors such as CD26, CXCR4, heparan sulfate proteoglycans (HSPG) or LDLR. Neurons are rarely infected, but they internalize Tat via their LDLR. Through its interaction with nuclear HATs, Tat is potentially able to control the acetylation-dependent cellular gene expression. Modulates the expression of many cellular genes involved in cell survival, proliferation or in coding for cytokines or cytokine receptors. Tat plays a role in T-cell and neurons apoptosis. Tat induced neurotoxicity and apoptosis probably contribute to neuroAIDS. Circulating Tat also acts as a chemokine-like and/or growth factor-like molecule that binds to specific receptors on the surface of the cells, affecting many cellular pathways. In the vascular system, Tat binds to ITGAV/ITGB3 and ITGA5/ITGB1 integrins dimers at the surface of endothelial cells and competes with bFGF for heparin-binding sites, leading to an excess of soluble bFGF. The polypeptide is Protein Tat (Homo sapiens (Human)).